The chain runs to 384 residues: MRIFISTGEVSGDLQGAMLIEALKRQAALKAMDLEIVALGGDRMAETGVSLLGKTPKIASIGLIEALPFIMPTWKLQRKAKQYLQENPPDLLILIDYCGPNVAIGKYARKNIPQVPILYYIAPQAWVWTTNKKTTQDLVNITDHLLAIFSEEARYFAQKGMSVSWVGHPILDRMAQAPTREEARQKLGIKPDQTAIALLPVSRKQELKYLLPVVCQAAQQIQEKLPDVQFLIPLALEDYRSTISAMMEEYGLQGTILDGKSLDALAAADLAIAKSGTVNLELALLNVPQVVVYRLTPLTLWIAQNILKFSVPFLSPVNLVVMEEVVPELFQERATPEQIVQESLDLLLNPQRRQKTLSDYQRVREELGEVGVCDRAAQEILDYV.

It belongs to the LpxB family.

The catalysed reaction is a lipid X + a UDP-2-N,3-O-bis[(3R)-3-hydroxyacyl]-alpha-D-glucosamine = a lipid A disaccharide + UDP + H(+). It participates in bacterial outer membrane biogenesis; LPS lipid A biosynthesis. Its function is as follows. Condensation of UDP-2,3-diacylglucosamine and 2,3-diacylglucosamine-1-phosphate to form lipid A disaccharide, a precursor of lipid A, a phosphorylated glycolipid that anchors the lipopolysaccharide to the outer membrane of the cell. The sequence is that of Lipid-A-disaccharide synthase from Gloeothece citriformis (strain PCC 7424) (Cyanothece sp. (strain PCC 7424)).